Consider the following 374-residue polypeptide: Fanconi anemia group F protein (374 aa).

As to quaternary structure, belongs to the multisubunit FA complex composed of FANCA, FANCB, FANCC, FANCE, FANCF, FANCG, FANCL/PHF9 and FANCM. The complex is not found in FA patients. In complex with FANCA, FANCG and FANCL, but not with FANCC, nor FANCE, interacts with HES1; this interaction may be essential for the stability and nuclear localization of FA core complex proteins.

Its subcellular location is the nucleus. Its function is as follows. DNA repair protein that may operate in a postreplication repair or a cell cycle checkpoint function. May be implicated in interstrand DNA cross-link repair and in the maintenance of normal chromosome stability. The polypeptide is Fanconi anemia group F protein (FANCF) (Homo sapiens (Human)).